A 289-amino-acid polypeptide reads, in one-letter code: RING-H2 finger protein ATL29 (289 aa).

The chain crosses the membrane as a helical span at residues 25-45 (VILTVILLVFFFIGFFTLYFC). Residues 110–152 (CAICLLEFDGDHVLRLLTTCYHVFHQECIDLWFESHRTCPVCR) form an RING-type; atypical zinc finger. The interval 179–237 (TSDDEEDDHHRQQTTTQIDTWPSSGQTSSIKKEQNLPEKFSRSHSTGHSIVRNKPEEED) is disordered. Over residues 191 to 207 (QTTTQIDTWPSSGQTSS) the composition is skewed to polar residues. A compositionally biased stretch (basic and acidic residues) spans 208-219 (IKKEQNLPEKFS).

It belongs to the RING-type zinc finger family. ATL subfamily.

It is found in the membrane. The catalysed reaction is S-ubiquitinyl-[E2 ubiquitin-conjugating enzyme]-L-cysteine + [acceptor protein]-L-lysine = [E2 ubiquitin-conjugating enzyme]-L-cysteine + N(6)-ubiquitinyl-[acceptor protein]-L-lysine.. It functions in the pathway protein modification; protein ubiquitination. The chain is RING-H2 finger protein ATL29 (ATL29) from Arabidopsis thaliana (Mouse-ear cress).